A 247-amino-acid chain; its full sequence is Probable transcriptional regulatory protein BT_0627 (247 aa).

Belongs to the TACO1 family.

It localises to the cytoplasm. This Bacteroides thetaiotaomicron (strain ATCC 29148 / DSM 2079 / JCM 5827 / CCUG 10774 / NCTC 10582 / VPI-5482 / E50) protein is Probable transcriptional regulatory protein BT_0627.